The following is a 197-amino-acid chain: Peptide deformylase (197 aa).

Residues Cys106 and His148 each coordinate Fe cation. Glu149 is an active-site residue. Position 152 (His152) interacts with Fe cation.

It belongs to the polypeptide deformylase family. Requires Fe(2+) as cofactor.

The catalysed reaction is N-terminal N-formyl-L-methionyl-[peptide] + H2O = N-terminal L-methionyl-[peptide] + formate. Removes the formyl group from the N-terminal Met of newly synthesized proteins. Requires at least a dipeptide for an efficient rate of reaction. N-terminal L-methionine is a prerequisite for activity but the enzyme has broad specificity at other positions. The chain is Peptide deformylase from Mycolicibacterium gilvum (strain PYR-GCK) (Mycobacterium gilvum (strain PYR-GCK)).